Consider the following 308-residue polypeptide: Aspartate carbamoyltransferase catalytic subunit (308 aa).

Carbamoyl phosphate is bound by residues arginine 59 and threonine 60. Residue lysine 87 participates in L-aspartate binding. Arginine 109, histidine 139, and glutamine 142 together coordinate carbamoyl phosphate. 2 residues coordinate L-aspartate: arginine 172 and arginine 224. Positions 265 and 266 each coordinate carbamoyl phosphate.

This sequence belongs to the aspartate/ornithine carbamoyltransferase superfamily. ATCase family. In terms of assembly, heterododecamer (2C3:3R2) of six catalytic PyrB chains organized as two trimers (C3), and six regulatory PyrI chains organized as three dimers (R2).

The catalysed reaction is carbamoyl phosphate + L-aspartate = N-carbamoyl-L-aspartate + phosphate + H(+). Its pathway is pyrimidine metabolism; UMP biosynthesis via de novo pathway; (S)-dihydroorotate from bicarbonate: step 2/3. In terms of biological role, catalyzes the condensation of carbamoyl phosphate and aspartate to form carbamoyl aspartate and inorganic phosphate, the committed step in the de novo pyrimidine nucleotide biosynthesis pathway. This chain is Aspartate carbamoyltransferase catalytic subunit, found in Streptococcus thermophilus (strain ATCC BAA-491 / LMD-9).